Reading from the N-terminus, the 307-residue chain is Streptomycin 6-kinase (307 aa).

Leu133–Ala145 serves as a coordination point for streptomycin. Asp201 functions as the Proton acceptor in the catalytic mechanism.

The protein belongs to the aminoglycoside phosphotransferase family.

It catalyses the reaction streptomycin + ATP = streptomycin 6-phosphate + ADP + H(+). Functionally, the aminoglycoside phosphotransferases achieve inactivation of their antibiotic substrates by phosphorylation. This is Streptomycin 6-kinase (sph) from Streptomyces glaucescens.